The primary structure comprises 325 residues: Tartrate-resistant acid phosphatase type 5 (325 aa).

An N-terminal signal peptide occupies residues 1 to 21; that stretch reads MDTWTLLLVLHTSLLLPWAEG. Asparagine 116 and asparagine 147 each carry an N-linked (GlcNAc...) asparagine glycan.

Exists either as monomer or, after proteolytic processing, as a dimer of two chains linked by disulfide bond(s). Fe cation is required as a cofactor.

The protein resides in the lysosome. It carries out the reaction a phosphate monoester + H2O = an alcohol + phosphate. In Oryctolagus cuniculus (Rabbit), this protein is Tartrate-resistant acid phosphatase type 5 (ACP5).